A 361-amino-acid chain; its full sequence is uncharacterized protein (361 aa).

Disordered regions lie at residues 53–75 and 150–211; these read KNIS…NINN and NYNN…YHHY. Residues 150–198 are compositionally biased toward low complexity; it reads NYNNYNNNNNNNNNNNNNNNNNNNNNNNNNNNNNNKNNNKNNNNKPNNF. Positions 199–211 are enriched in basic residues; it reads IHHHHHHHHYHHY. Residues 225 to 245 form a helical membrane-spanning segment; the sequence is IFIGLMAFLILFILMVIGLLI.

Its subcellular location is the membrane. This is an uncharacterized protein from Dictyostelium discoideum (Social amoeba).